Consider the following 264-residue polypeptide: Diphthine synthase (264 aa).

S-adenosyl-L-methionine-binding positions include L10, D87, V90, 115-116, L166, A209, and H234; that span reads SI.

The protein belongs to the diphthine synthase family. Homodimer.

The enzyme catalyses 2-[(3S)-amino-3-carboxypropyl]-L-histidyl-[translation elongation factor 2] + 3 S-adenosyl-L-methionine = diphthine-[translation elongation factor 2] + 3 S-adenosyl-L-homocysteine + 3 H(+). The protein operates within protein modification; peptidyl-diphthamide biosynthesis. Functionally, S-adenosyl-L-methionine-dependent methyltransferase that catalyzes the trimethylation of the amino group of the modified target histidine residue in translation elongation factor 2 (EF-2), to form an intermediate called diphthine. The three successive methylation reactions represent the second step of diphthamide biosynthesis. The sequence is that of Diphthine synthase from Thermococcus onnurineus (strain NA1).